A 442-amino-acid polypeptide reads, in one-letter code: Phosphoglucosamine mutase (442 aa).

Residue serine 98 is the Phosphoserine intermediate of the active site. Serine 98, aspartate 236, aspartate 238, and aspartate 240 together coordinate Mg(2+). The residue at position 98 (serine 98) is a Phosphoserine.

The protein belongs to the phosphohexose mutase family. Requires Mg(2+) as cofactor. Activated by phosphorylation.

It carries out the reaction alpha-D-glucosamine 1-phosphate = D-glucosamine 6-phosphate. In terms of biological role, catalyzes the conversion of glucosamine-6-phosphate to glucosamine-1-phosphate. The chain is Phosphoglucosamine mutase from Natranaerobius thermophilus (strain ATCC BAA-1301 / DSM 18059 / JW/NM-WN-LF).